An 879-amino-acid chain; its full sequence is Alanine--tRNA ligase (879 aa).

Residues histidine 567, histidine 571, cysteine 669, and histidine 673 each contribute to the Zn(2+) site.

Belongs to the class-II aminoacyl-tRNA synthetase family. The cofactor is Zn(2+).

The protein resides in the cytoplasm. The enzyme catalyses tRNA(Ala) + L-alanine + ATP = L-alanyl-tRNA(Ala) + AMP + diphosphate. Functionally, catalyzes the attachment of alanine to tRNA(Ala) in a two-step reaction: alanine is first activated by ATP to form Ala-AMP and then transferred to the acceptor end of tRNA(Ala). Also edits incorrectly charged Ser-tRNA(Ala) and Gly-tRNA(Ala) via its editing domain. In Lactobacillus acidophilus (strain ATCC 700396 / NCK56 / N2 / NCFM), this protein is Alanine--tRNA ligase.